Consider the following 283-residue polypeptide: Glutamate racemase (283 aa).

Residues 7–8 and 39–40 contribute to the substrate site; these read DS and YG. Catalysis depends on cysteine 70, which acts as the Proton donor/acceptor. 71 to 72 provides a ligand contact to substrate; it reads NT. Cysteine 206 serves as the catalytic Proton donor/acceptor. 207-208 is a binding site for substrate; it reads TH.

Belongs to the aspartate/glutamate racemases family.

The enzyme catalyses L-glutamate = D-glutamate. It functions in the pathway cell wall biogenesis; peptidoglycan biosynthesis. In terms of biological role, provides the (R)-glutamate required for cell wall biosynthesis. The protein is Glutamate racemase of Caulobacter sp. (strain K31).